A 735-amino-acid polypeptide reads, in one-letter code: F-box and leucine-rich repeat protein 13 (735 aa).

One can recognise an F-box domain in the interval 152-198 (KCDISLLPERAILQIFFYLSLKDVIICGQVNHAWMLMTQLNSLWNAI). LRR repeat units lie at residues 230–254 (GCLL…NVSD), 255–280 (CPTF…NLSN), 281–305 (TTIT…SLAY), 306–333 (CRRF…DLSG), 334–359 (CTQI…TIND), 360–385 (MPTL…VFTG), 386–406 (APHI…RKIR), 410–435 (NKRV…YMAD), 436–460 (CKGI…NLAN), 461–488 (CVRI…NLSN), 489–514 (CVRL…SLRN), 515–538 (CEHL…IDLS), 539–563 (GTDI…SVSE), 564–589 (CYRI…DVSY), 590–615 (CSQL…SIAG), 616–641 (CPKI…DISG), and 642–667 (CVLL…KMQY). Polar residues predominate over residues 682–692 (KVQQQEYNTND). The tract at residues 682–703 (KVQQQEYNTNDPPRWFGYDREG) is disordered.

The protein belongs to the DRC6 family. As to quaternary structure, component of the nexin-dynein regulatory complex (N-DRC). Directly interacts with SKP1 and CUL1. Interacts with TCTE1/DRC5.

It localises to the cytoplasm. The protein resides in the cytoskeleton. It is found in the flagellum axoneme. Its subcellular location is the microtubule organizing center. The protein localises to the centrosome. In terms of biological role, substrate-recognition component of the SCF (SKP1-CUL1-F-box protein)-type E3 ubiquitin ligase complex. Component of the nexin-dynein regulatory complex (N-DRC), a key regulator of ciliary/flagellar motility which maintains the alignment and integrity of the distal axoneme and regulates microtubule sliding in motile axonemes. Specifically targets CEP192 isoform 3 for ubiquitin-mediated proteolysis and thereby acts as a regulator of microtubule nucleation activity. This is F-box and leucine-rich repeat protein 13 (FBXL13) from Homo sapiens (Human).